We begin with the raw amino-acid sequence, 348 residues long: A-kinase anchor protein 7 isoform gamma (348 aa).

The tract at residues 1–25 is disordered; sequence MERPEAGGINSNECENVSRKKKMSE. Residues T129 and 219–221 each bind AMP; that span reads HLT. Residues T129 and 219–221 contribute to the CMP site; that span reads HLT. A PKA-RII-alpha subunit binding domain region spans residues 294–348; the sequence is AELVRLSKRLVENAVLKAVQQYLEETQNKNKPGEGSSVKTEAADQNGNDNENNRK. The segment at 295-319 is RI-alpha-binding; it reads ELVRLSKRLVENAVLKAVQQYLEET. The interval 296–309 is RII-binding; it reads LVRLSKRLVENAVL. A disordered region spans residues 316 to 348; the sequence is LEETQNKNKPGEGSSVKTEAADQNGNDNENNRK. Polar residues predominate over residues 330-348; it reads SVKTEAADQNGNDNENNRK.

Binds cAMP-dependent protein kinase (PKA). Interacts with PRKCA; only the cytoplasmic form is capable of interacting with PRKCA. In terms of tissue distribution, expressed in brain, heart, lung, pancreas and placenta.

The protein resides in the nucleus. It is found in the cytoplasm. In terms of biological role, probably targets cAMP-dependent protein kinase (PKA) to the cellular membrane or cytoskeletal structures. The membrane-associated form reduces epithelial sodium channel (ENaC) activity, whereas the free cytoplasmic form may negatively regulate ENaC channel feedback inhibition by intracellular sodium. This Homo sapiens (Human) protein is A-kinase anchor protein 7 isoform gamma (AKAP7).